Consider the following 205-residue polypeptide: Phosphoribosyl-dephospho-CoA transferase (205 aa).

Catalysis depends on residues Asp-134 and Asp-136.

It belongs to the MdcG family.

The enzyme catalyses apo-[malonate decarboxylase ACP] + 2'-(5''-triphospho-alpha-D-ribosyl)-3'-dephospho-CoA = holo-[malonate decarboxylase ACP] + diphosphate. Its function is as follows. Transfers 2'-(5-triphosphoribosyl)-3'-dephosphocoenzyme-A to the apo-[acyl-carrier-protein] of the malonate decarboxylase to yield holo-[acyl-carrier-protein]. The protein is Phosphoribosyl-dephospho-CoA transferase of Klebsiella pneumoniae subsp. pneumoniae (strain ATCC 700721 / MGH 78578).